Reading from the N-terminus, the 668-residue chain is Golgin subfamily A member 6-like protein 1 (668 aa).

5 disordered regions span residues 1–120, 323–356, 384–466, 481–591, and 603–639; these read MLMW…HQEA, IREQ…RQEE, EKMH…EMWR, KEKM…REQE, and EQEE…MRRQ. A compositionally biased stretch (basic residues) spans 15-41; that stretch reads LPTHPHLPTHPHLPTHPHLPTHPHLPT. A compositionally biased stretch (basic and acidic residues) spans 51-72; it reads MSKETRQSKLAEAKEQLTDHHP. 2 stretches are compositionally biased toward polar residues: residues 73 to 83 and 91 to 103; these read QTNPSVGTAAS and NNGT…TSGG. Residues 106-120 are compositionally biased toward basic and acidic residues; it reads SPEDEQKASHQHQEA. Positions 177–663 form a coiled coil; that stretch reads LEQALSAVAT…EEKMQEHQEH (487 aa).

This sequence belongs to the GOLGA6 family.

The protein is Golgin subfamily A member 6-like protein 1 (GOLGA6L1) of Homo sapiens (Human).